The primary structure comprises 184 residues: ATP synthase subunit b, chloroplastic (184 aa).

The helical transmembrane segment at 31–53 threads the bilayer; the sequence is LINLGIVISLLIYFGKGVLSNLL.

This sequence belongs to the ATPase B chain family. As to quaternary structure, F-type ATPases have 2 components, F(1) - the catalytic core - and F(0) - the membrane proton channel. F(1) has five subunits: alpha(3), beta(3), gamma(1), delta(1), epsilon(1). F(0) has four main subunits: a(1), b(1), b'(1) and c(10-14). The alpha and beta chains form an alternating ring which encloses part of the gamma chain. F(1) is attached to F(0) by a central stalk formed by the gamma and epsilon chains, while a peripheral stalk is formed by the delta, b and b' chains.

The protein resides in the plastid. The protein localises to the chloroplast thylakoid membrane. Functionally, f(1)F(0) ATP synthase produces ATP from ADP in the presence of a proton or sodium gradient. F-type ATPases consist of two structural domains, F(1) containing the extramembraneous catalytic core and F(0) containing the membrane proton channel, linked together by a central stalk and a peripheral stalk. During catalysis, ATP synthesis in the catalytic domain of F(1) is coupled via a rotary mechanism of the central stalk subunits to proton translocation. Its function is as follows. Component of the F(0) channel, it forms part of the peripheral stalk, linking F(1) to F(0). This Aneura mirabilis (Parasitic liverwort) protein is ATP synthase subunit b, chloroplastic.